Reading from the N-terminus, the 73-residue chain is MNWELCDDYPSKAPPETCNKVDGARRCRTSCNNEGYGGANCNLKGKVKVCECTILRVCLPHHKRPPHVPKPPK.

4 cysteine pairs are disulfide-bonded: cysteine 6/cysteine 58, cysteine 18/cysteine 41, cysteine 27/cysteine 50, and cysteine 31/cysteine 52.

This sequence belongs to the DEFL family.

The chain is Putative defensin-like protein 42 from Arabidopsis thaliana (Mouse-ear cress).